We begin with the raw amino-acid sequence, 48 residues long: Gas vesicle protein A (48 aa).

This sequence belongs to the gas vesicle GvpA family. The gas vesicle shell is 2 nm thick and consists of a single layer of this protein. It forms helical ribs nearly perpendicular to the long axis of the vesicle.

It localises to the gas vesicle shell. Gas vesicles are hollow, gas filled proteinaceous nanostructures found in some microorganisms. During planktonic growth they allow positioning of the organism at a favorable depth for light or nutrient acquisition. GvpA forms the protein shell. This chain is Gas vesicle protein A, found in Spirulina sp. (strain CCAP 1475/10).